The following is a 293-amino-acid chain: MFYGSVVALITPFKDGTLDRQGLKRLIEFHIENGTDAIVVAGTTGESPTLTYEEHELLIELAVGYSNKRIPIIAGTGANSTHEAITLTKFAEKVGADASLQVVPYYNKPTQEGIYQHFKAIAEETNIPLILYNIPSRTGVDMLPETFARLYGDFPNVIGIKEATGNVARVSETISLTNEDVLILSGDDALTLPMMAVGAKGVISVANNIIPKEISQMCKLALEGKFEEAKKIHNQYWDLFKVLFIETNPIPIKTAAYLMGLIESLELRLPLYTMSKSNEEKLKEVLRKHSLIK.

Threonine 44 contacts pyruvate. Tyrosine 132 functions as the Proton donor/acceptor in the catalytic mechanism. The active-site Schiff-base intermediate with substrate is lysine 161. A pyruvate-binding site is contributed by isoleucine 203.

This sequence belongs to the DapA family. Homotetramer; dimer of dimers.

The protein resides in the cytoplasm. It catalyses the reaction L-aspartate 4-semialdehyde + pyruvate = (2S,4S)-4-hydroxy-2,3,4,5-tetrahydrodipicolinate + H2O + H(+). It participates in amino-acid biosynthesis; L-lysine biosynthesis via DAP pathway; (S)-tetrahydrodipicolinate from L-aspartate: step 3/4. Functionally, catalyzes the condensation of (S)-aspartate-beta-semialdehyde [(S)-ASA] and pyruvate to 4-hydroxy-tetrahydrodipicolinate (HTPA). In Sulfurihydrogenibium sp. (strain YO3AOP1), this protein is 4-hydroxy-tetrahydrodipicolinate synthase.